We begin with the raw amino-acid sequence, 301 residues long: Cuticle collagen 1 (301 aa).

The N-terminal stretch at 1–37 (METDGRLKAYKFVAYAAVGFSIAAVASVLLTLPMVYS) is a signal peptide. Residues 79-82 (RTTR) form a furin-like endopeptidase recognition region region. Triple-helical region regions lie at residues 105 to 134 (GPPGPAGAPGKPGKPGRPGAPGTPGTPGKP), 153 to 179 (GPPGPPGPPGAPGDPGEAGTPGRPGTD), 183 to 209 (GSPGPRGPPGPAGEAGAPGPAGEPGTP), and 218 to 283 (GAPG…KGIC). A disordered region spans residues 109 to 284 (PAGAPGKPGK…GTPGEKGICP (176 aa)). Pro residues-rich tracts occupy residues 131–164 (PGKPPVAPCEPTTPPPCKPCPQGPPGPPGPPGAP) and 184–193 (SPGPRGPPGP). Over residues 194 to 210 (AGEAGAPGPAGEPGTPA) the composition is skewed to low complexity. Over residues 226-258 (SGPPGPPGPPGAPGNDGPPGPPGPKGAPGPDGP) the composition is skewed to pro residues.

The protein belongs to the cuticular collagen family. As to quaternary structure, collagen polypeptide chains are complexed within the cuticle by disulfide bonds and other types of covalent cross-links.

It is found in the secreted. The protein resides in the extracellular space. In terms of biological role, secreted collagen that forms part of the nematode cuticle, which functions as an exoskeleton and a barrier to protect the worm from its environment. Secretion and subsequent incorporation into the cuticle is likely mediated by bli-4, which probably cleaves at the N-terminal consensus furin cleavage site. The sequence is that of Cuticle collagen 1 (sqt-3) from Caenorhabditis elegans.